We begin with the raw amino-acid sequence, 283 residues long: MIVVSEIADLKTIISEWKQNQETIGFCPTMGTLHDGHMDLVKTSKGQCTKTIVSIFINPTQFNDPKDFDAYPKNTESDLKLCEEHGVDLVFLPSVEVIYPKSQTPIQMSIPSLQTTLCGRTRPGHFEGVLQIVSKLFHLTEPNYGFFGLKDYQQYRIISAMVEELNFPIKILGVPTKRESDGLAMSSRNLRLSPKDRETASLIPRMFQLAKKTLLGGEKNLIVWKEILTDFLLTGSNVKIDYLEIVDPITLQPLSNLNGELLLATAVFVGEVRLIDNEVLVSP.

Residue 30–37 (MGTLHDGH) participates in ATP binding. The Proton donor role is filled by H37. Position 61 (Q61) interacts with (R)-pantoate. Q61 is a beta-alanine binding site. Residue 148-151 (GLKD) participates in ATP binding. Residue Q154 coordinates (R)-pantoate. 185 to 188 (MSSR) contacts ATP.

This sequence belongs to the pantothenate synthetase family. In terms of assembly, homodimer.

It localises to the cytoplasm. It catalyses the reaction (R)-pantoate + beta-alanine + ATP = (R)-pantothenate + AMP + diphosphate + H(+). Its pathway is cofactor biosynthesis; (R)-pantothenate biosynthesis; (R)-pantothenate from (R)-pantoate and beta-alanine: step 1/1. Its function is as follows. Catalyzes the condensation of pantoate with beta-alanine in an ATP-dependent reaction via a pantoyl-adenylate intermediate. This Leptospira biflexa serovar Patoc (strain Patoc 1 / Ames) protein is Pantothenate synthetase.